Consider the following 733-residue polypeptide: Ferric aerobactin receptor (733 aa).

The N-terminal stretch at 1–25 (MMISKKYTLWALNPLLLTMMAPAVA) is a signal peptide. A TonB box motif is present at residues 31 to 38 (ETFVVSAN). Residues 43-153 (TVAEMAQTTW…TGGLINIVTK (111 aa)) form the TBDR plug domain. The TBDR beta-barrel domain maps to 158–733 (ETIMEFEAGT…TFGLNYSVLF (576 aa)). Residues 716–733 (YDYKGRGRTFGLNYSVLF) carry the TonB C-terminal box motif.

It belongs to the TonB-dependent receptor family.

The protein resides in the cell outer membrane. Functionally, receptor for aerobactin. The protein is Ferric aerobactin receptor (iutA) of Klebsiella pneumoniae.